The following is a 392-amino-acid chain: Aryl-hydrocarbon-interacting protein-like 1 (392 aa).

One can recognise a PPIase FKBP-type domain in the interval 53–145 (RQVDQPMHII…DLDELQKEPQ (93 aa)). TPR repeat units follow at residues 178-211 (VPVL…LRNL), 230-263 (NTLT…HPGI), and 264-297 (VKAY…EPSM). The disordered stretch occupies residues 329 to 392 (QGATQPPAEP…PLSPGHSLQH (64 aa)). 2 stretches are compositionally biased toward pro residues: residues 335–346 (PAEPPAQPPTAP) and 355–366 (PADPPAEPPTAP).

As to quaternary structure, interacts with NUB1.

Its subcellular location is the cytoplasm. It is found in the nucleus. May be important in protein trafficking and/or protein folding and stabilization. This Macaca mulatta (Rhesus macaque) protein is Aryl-hydrocarbon-interacting protein-like 1 (AIPL1).